Consider the following 385-residue polypeptide: S-adenosylmethionine synthase (385 aa).

Residue His-16 participates in ATP binding. A Mg(2+)-binding site is contributed by Asp-18. Residue Glu-44 coordinates K(+). Glu-57 and Gln-100 together coordinate L-methionine. The segment at 100 to 110 (QSPDINQGVDR) is flexible loop. ATP is bound by residues 164-166 (DGK), 230-231 (KF), Asp-239, 245-246 (RK), Ala-262, and Lys-266. Residue Asp-239 coordinates L-methionine. Lys-270 lines the L-methionine pocket.

It belongs to the AdoMet synthase family. Homotetramer; dimer of dimers. The cofactor is Mg(2+). It depends on K(+) as a cofactor.

It is found in the cytoplasm. It carries out the reaction L-methionine + ATP + H2O = S-adenosyl-L-methionine + phosphate + diphosphate. Its pathway is amino-acid biosynthesis; S-adenosyl-L-methionine biosynthesis; S-adenosyl-L-methionine from L-methionine: step 1/1. Functionally, catalyzes the formation of S-adenosylmethionine (AdoMet) from methionine and ATP. The overall synthetic reaction is composed of two sequential steps, AdoMet formation and the subsequent tripolyphosphate hydrolysis which occurs prior to release of AdoMet from the enzyme. The polypeptide is S-adenosylmethionine synthase (Helicobacter pylori (strain G27)).